The chain runs to 401 residues: Leucine aminopeptidase 1 (401 aa).

Residues methionine 1–alanine 18 form the signal peptide. The propeptide occupies arginine 19–lysine 87. N-linked (GlcNAc...) asparagine glycosylation occurs at asparagine 179. Residues histidine 187, aspartate 206, glutamate 245, and aspartate 272 each contribute to the Zn(2+) site. Cysteines 321 and 325 form a disulfide. Histidine 354 serves as a coordination point for Zn(2+).

This sequence belongs to the peptidase M28 family. M28E subfamily. Monomer. Zn(2+) is required as a cofactor.

The protein resides in the secreted. Its function is as follows. Extracellular aminopeptidase that allows assimilation of proteinaceous substrates. The sequence is that of Leucine aminopeptidase 1 (LAP1) from Colletotrichum graminicola (strain M1.001 / M2 / FGSC 10212) (Maize anthracnose fungus).